A 473-amino-acid polypeptide reads, in one-letter code: Vasculin (473 aa).

Disordered stretches follow at residues 1–25 (MAQH…SSLN), 44–170 (RRRH…SRTP), and 186–341 (SGFP…HQER). Phosphoserine is present on Ser49. Residue Arg87 is modified to Omega-N-methylarginine. The segment covering 94–117 (NSRSRSSIFHSGKSQGLHENSIPD) has biased composition (polar residues). The segment covering 119 to 133 (ETGRKEDKRERRQFE) has biased composition (basic and acidic residues). Composition is skewed to polar residues over residues 193-204 (NLQSQPVKNGTG) and 248-286 (NFNT…QQPR). 4 positions are modified to phosphoserine: Ser274, Ser276, Ser322, and Ser381. Residues 293 to 329 (MRSDKKSEFLKALKRDRVEEEHEDESHAGSEKDDDSF) show a composition bias toward basic and acidic residues. Positions 450–473 (TFKPTIENDDTETSSSDTSDDDDV) are disordered. Over residues 456–473 (ENDDTETSSSDTSDDDDV) the composition is skewed to acidic residues.

The protein belongs to the vasculin family. In terms of assembly, interacts with GTF2B, GTF2F2, RNA polymerase II and TBP. In terms of tissue distribution, ubiquitously expressed (at protein level).

The protein resides in the nucleus. Functions as a GC-rich promoter-specific transactivating transcription factor. The polypeptide is Vasculin (Gpbp1) (Mus musculus (Mouse)).